The chain runs to 124 residues: uncharacterized protein (124 aa).

An N-terminal signal peptide occupies residues 1–19 (MRLLVQKVILIYLARYAKS). 2 consecutive transmembrane segments (helical) span residues 37-57 (IAEF…GVKF) and 86-108 (LGAL…IIII).

It is found in the membrane. This is an uncharacterized protein from Saccharomyces cerevisiae (strain ATCC 204508 / S288c) (Baker's yeast).